Reading from the N-terminus, the 514-residue chain is Maturase K (514 aa).

Belongs to the intron maturase 2 family. MatK subfamily.

It localises to the plastid. The protein resides in the chloroplast. In terms of biological role, usually encoded in the trnK tRNA gene intron. Probably assists in splicing its own and other chloroplast group II introns. This is Maturase K from Acer palmatum (Japanese maple).